A 350-amino-acid polypeptide reads, in one-letter code: tRNA pseudouridine synthase D (350 aa).

Residue Asp-85 is the Nucleophile of the active site. A TRUD domain is found at 160–310; it reads GVINYFGEQR…EAARRTILLR (151 aa).

This sequence belongs to the pseudouridine synthase TruD family.

The enzyme catalyses uridine(13) in tRNA = pseudouridine(13) in tRNA. Its function is as follows. Responsible for synthesis of pseudouridine from uracil-13 in transfer RNAs. This chain is tRNA pseudouridine synthase D, found in Idiomarina loihiensis (strain ATCC BAA-735 / DSM 15497 / L2-TR).